Reading from the N-terminus, the 953-residue chain is Eukaryotic translation initiation factor 3 subunit A (953 aa).

The PCI domain occupies 323–504 (LQKMASHVLL…KSISFGLDLH (182 aa)). Coiled-coil stretches lie at residues 593 to 642 (QERE…KRQA), 670 to 704 (MNADDIIAKQVEQLDKEKRELQTKLKTQEKKVDYF), and 732 to 877 (ENQE…LEER). A disordered region spans residues 603–623 (IKKQKVENQEAEQKRLDEERR). Disordered regions lie at residues 810–861 (ERKK…EIDR) and 893–953 (GWGD…ITMS). 3 stretches are compositionally biased toward basic and acidic residues: residues 812–861 (KKIE…EIDR), 895–919 (GDHEDGGDRWRDERGGDRGPDRGGD), and 928–953 (WQREEPDRGGDRWRGGDRRDGMITMS).

This sequence belongs to the eIF-3 subunit A family. Component of the eukaryotic translation initiation factor 3 (eIF-3) complex.

The protein resides in the cytoplasm. RNA-binding component of the eukaryotic translation initiation factor 3 (eIF-3) complex, which is involved in protein synthesis of a specialized repertoire of mRNAs and, together with other initiation factors, stimulates binding of mRNA and methionyl-tRNAi to the 40S ribosome. The eIF-3 complex specifically targets and initiates translation of a subset of mRNAs involved in cell proliferation. In Nematostella vectensis (Starlet sea anemone), this protein is Eukaryotic translation initiation factor 3 subunit A.